The following is a 519-amino-acid chain: Cytochrome P450 CYP99A1 (519 aa).

Cys453 provides a ligand contact to heme.

It belongs to the cytochrome P450 family. Heme serves as cofactor.

Its subcellular location is the membrane. The chain is Cytochrome P450 CYP99A1 (CYP99A1) from Sorghum bicolor (Sorghum).